The chain runs to 293 residues: Extracellular metalloprotease PODANS_2_14170 (293 aa).

A signal peptide spans 1–18; the sequence is MRFSLALAAAGLAQTAFA. An N-linked (GlcNAc...) asparagine glycan is attached at N60. Zn(2+) is bound at residue H206. E207 is an active-site residue. Residue H210 coordinates Zn(2+). C242 and C269 are disulfide-bonded.

This sequence belongs to the peptidase M43B family.

It is found in the secreted. Functionally, secreted metalloproteinase that allows assimilation of proteinaceous substrates. The sequence is that of Extracellular metalloprotease PODANS_2_14170 from Podospora anserina (strain S / ATCC MYA-4624 / DSM 980 / FGSC 10383) (Pleurage anserina).